A 391-amino-acid chain; its full sequence is FLUCTUATING-LIGHT-ACCLIMATION protein 1, chloroplastic (391 aa).

The transit peptide at 1–48 (MASSSTFLELTPFQWNQPLPYTQRPHHRTVLLYSKPQRRSNSIRLQIS) directs the protein to the chloroplast. Residues 87–107 (AIAAVLLGLLLFYDPNSALAA) form a helical membrane-spanning segment. The segment covering 116–138 (SFSSRSRSSSSSSSQSYSVPRTS) has biased composition (low complexity). Positions 116 to 140 (SFSSRSRSSSSSSSQSYSVPRTSNP) are disordered. Helical transmembrane passes span 168–188 (FGFGGFSSFSLILVGFAAFVL) and 321–341 (YIVVTILMAAEGIHKLPPING).

This sequence belongs to the FLAP family.

It is found in the plastid. The protein resides in the chloroplast thylakoid membrane. The protein localises to the chloroplast membrane. Its subcellular location is the chloroplast envelope. Functionally, monitors proton H(+) homeostasis in chloroplasts to manipulate luminal acidification levels appropriately to balance photoprotection and photochemical processes. Required during acclimation response to fluctuating light (e.g. photosynthetic activity optimization) by controlling non-photochemical quenching (NPQ); acts independently from DLDG1. This chain is FLUCTUATING-LIGHT-ACCLIMATION protein 1, chloroplastic, found in Arabidopsis thaliana (Mouse-ear cress).